We begin with the raw amino-acid sequence, 298 residues long: Lipoyl synthase (298 aa).

Cys-40, Cys-45, Cys-51, Cys-67, Cys-71, Cys-74, and Ser-280 together coordinate [4Fe-4S] cluster. The region spanning 53 to 269 (AVRKTATFMI…KEIALSKGFS (217 aa)) is the Radical SAM core domain.

This sequence belongs to the radical SAM superfamily. Lipoyl synthase family. It depends on [4Fe-4S] cluster as a cofactor.

It localises to the cytoplasm. The enzyme catalyses [[Fe-S] cluster scaffold protein carrying a second [4Fe-4S](2+) cluster] + N(6)-octanoyl-L-lysyl-[protein] + 2 oxidized [2Fe-2S]-[ferredoxin] + 2 S-adenosyl-L-methionine + 4 H(+) = [[Fe-S] cluster scaffold protein] + N(6)-[(R)-dihydrolipoyl]-L-lysyl-[protein] + 4 Fe(3+) + 2 hydrogen sulfide + 2 5'-deoxyadenosine + 2 L-methionine + 2 reduced [2Fe-2S]-[ferredoxin]. It functions in the pathway protein modification; protein lipoylation via endogenous pathway; protein N(6)-(lipoyl)lysine from octanoyl-[acyl-carrier-protein]. Functionally, catalyzes the radical-mediated insertion of two sulfur atoms into the C-6 and C-8 positions of the octanoyl moiety bound to the lipoyl domains of lipoate-dependent enzymes, thereby converting the octanoylated domains into lipoylated derivatives. This Bacillus cereus (strain G9842) protein is Lipoyl synthase.